A 129-amino-acid polypeptide reads, in one-letter code: Small ribosomal subunit protein uS11c (129 aa).

This sequence belongs to the universal ribosomal protein uS11 family. Part of the 30S ribosomal subunit.

It localises to the plastid. Its subcellular location is the chloroplast. This Rhodomonas salina (Cryptomonas salina) protein is Small ribosomal subunit protein uS11c.